Here is a 101-residue protein sequence, read N- to C-terminus: Small ribosomal subunit protein uS14 (101 aa).

Belongs to the universal ribosomal protein uS14 family. Part of the 30S ribosomal subunit. Contacts proteins S3 and S10.

Functionally, binds 16S rRNA, required for the assembly of 30S particles and may also be responsible for determining the conformation of the 16S rRNA at the A site. The polypeptide is Small ribosomal subunit protein uS14 (Aliivibrio fischeri (strain ATCC 700601 / ES114) (Vibrio fischeri)).